Here is a 247-residue protein sequence, read N- to C-terminus: 3-deoxy-manno-octulosonate cytidylyltransferase (247 aa).

This sequence belongs to the KdsB family.

It is found in the cytoplasm. The catalysed reaction is 3-deoxy-alpha-D-manno-oct-2-ulosonate + CTP = CMP-3-deoxy-beta-D-manno-octulosonate + diphosphate. It functions in the pathway nucleotide-sugar biosynthesis; CMP-3-deoxy-D-manno-octulosonate biosynthesis; CMP-3-deoxy-D-manno-octulosonate from 3-deoxy-D-manno-octulosonate and CTP: step 1/1. Its pathway is bacterial outer membrane biogenesis; lipopolysaccharide biosynthesis. Activates KDO (a required 8-carbon sugar) for incorporation into bacterial lipopolysaccharide in Gram-negative bacteria. The polypeptide is 3-deoxy-manno-octulosonate cytidylyltransferase (Methylobacterium radiotolerans (strain ATCC 27329 / DSM 1819 / JCM 2831 / NBRC 15690 / NCIMB 10815 / 0-1)).